The sequence spans 518 residues: Putative N-acetylmuramoyl-L-alanine amidase YrvJ (518 aa).

The signal sequence occupies residues 1–27 (MNKKYFVLIVCIIFTSALFPTFSSVTA). SH3b domains follow at residues 29–91 (QGEA…ITKE), 102–164 (SDTV…TSGG), 181–243 (STTG…LTSS), and 258–320 (AKKA…VQTS). 2 disordered regions span residues 94-121 (ASTS…PGTS) and 160-186 (VTSG…TGTV). Low complexity-rich tracts occupy residues 95–108 (STSS…VTST) and 160–169 (VTSGGSSSAS). The disordered stretch occupies residues 322-352 (SAEEAGEPPVSDSPSGNGSLNNKTIIVDPGH). Residues 333-345 (DSPSGNGSLNNKT) are compositionally biased toward polar residues. The 169-residue stretch at 346-514 (IIVDPGHGGK…VTDGIESGLE (169 aa)) folds into the MurNAc-LAA domain.

This sequence belongs to the N-acetylmuramoyl-L-alanine amidase 3 family.

The protein localises to the secreted. The protein resides in the cell wall. It catalyses the reaction Hydrolyzes the link between N-acetylmuramoyl residues and L-amino acid residues in certain cell-wall glycopeptides.. Its function is as follows. Probably involved in cell-wall metabolism. The protein is Putative N-acetylmuramoyl-L-alanine amidase YrvJ (yrvJ) of Bacillus subtilis (strain 168).